The sequence spans 395 residues: Chorismate synthase (395 aa).

R40 and R46 together coordinate NADP(+). FMN is bound by residues 135 to 137 and 256 to 257; these read RAS and QA. Basic and acidic residues predominate over residues 272–283; that stretch reads RRGSQAHDEMRP. The segment at 272-296 is disordered; it reads RRGSQAHDEMRPGPDGILRSTNRAG. Residues G300, 315–319, and R341 each bind FMN; that span reads KPIST.

This sequence belongs to the chorismate synthase family. In terms of assembly, homotetramer. The cofactor is FMNH2.

It carries out the reaction 5-O-(1-carboxyvinyl)-3-phosphoshikimate = chorismate + phosphate. It participates in metabolic intermediate biosynthesis; chorismate biosynthesis; chorismate from D-erythrose 4-phosphate and phosphoenolpyruvate: step 7/7. Catalyzes the anti-1,4-elimination of the C-3 phosphate and the C-6 proR hydrogen from 5-enolpyruvylshikimate-3-phosphate (EPSP) to yield chorismate, which is the branch point compound that serves as the starting substrate for the three terminal pathways of aromatic amino acid biosynthesis. This reaction introduces a second double bond into the aromatic ring system. The sequence is that of Chorismate synthase from Rhodococcus jostii (strain RHA1).